Reading from the N-terminus, the 517-residue chain is Nucleoside transporter FUN26 (517 aa).

Positions 1–63 (MSTSADTDTI…EREQSVSTEP (63 aa)) are disordered. Over residues 25–44 (THSEEISRSGEEHESENNEH) the composition is skewed to basic and acidic residues. A phosphoserine mark is found at serine 45 and serine 58. Helical transmembrane passes span 76 to 96 (LSYITFFAIGIGLLWPWNCIL), 116 to 136 (IFTSSMMSFSTISSMLFNIYL), 151 to 171 (LVWEIIVFTVMCFFTILHFLL), 174 to 194 (WFNFMFIMMLVVISSMGTAMT), 214 to 234 (MVGQAVAGVLPSLVLFALAFI), 243 to 263 (GGILLYFFTTTLVVTICVVMF), 344 to 364 (LVLSIFTTFVVTLVFPVFASA), 367 to 387 (VTGLPLSNAQYIPLIFTLWNL), 411 to 431 (TFIYSLLRVAAIPLFLMFTAI), 446 to 466 (IVDLCYMLLQFLFGVTNGHVI), and 492 to 512 (IFVSTGLALGSIISYVFVFII).

It belongs to the SLC29A/ENT transporter (TC 2.A.57) family.

The protein localises to the membrane. Functionally, has broad nucleoside selectivity (uridine, adenosine and cytidine) and most likely functions to transport nucleosides across intracellular membranes. In Saccharomyces cerevisiae (strain ATCC 204508 / S288c) (Baker's yeast), this protein is Nucleoside transporter FUN26 (FUN26).